The primary structure comprises 443 residues: Sensor histidine protein kinase HK06 (443 aa).

The next 2 membrane-spanning stretches (helical) occupy residues 16 to 36 (FAIL…TFPF) and 140 to 160 (ILLL…FVFS). The HAMP domain occupies 165 to 217 (KRLLNPLFYISEVTSKMQDLDDNIRFDESRKDEVGEVGKQINGMYEHLLKVIH). Residues 239 to 443 (GASHELKTPL…EHGMEFKISL (205 aa)) form the Histidine kinase domain. Position 242 is a phosphohistidine; by autocatalysis (His-242).

It is found in the cell membrane. It catalyses the reaction ATP + protein L-histidine = ADP + protein N-phospho-L-histidine.. Its function is as follows. Member of the two-component regulatory system HK06/RR06 involved in regulation of target genes, including choline-binding protein CbpA. Has been shown in one study to not be required for regulation of expression of choline-binding protein CbpA. The polypeptide is Sensor histidine protein kinase HK06 (Streptococcus pneumoniae serotype 2 (strain D39 / NCTC 7466)).